Consider the following 153-residue polypeptide: Holo-[acyl-carrier-protein] synthase (153 aa).

Residues Asp-24 and Glu-78 each coordinate Mg(2+).

Belongs to the P-Pant transferase superfamily. AcpS family. The cofactor is Mg(2+).

The protein resides in the cytoplasm. The catalysed reaction is apo-[ACP] + CoA = holo-[ACP] + adenosine 3',5'-bisphosphate + H(+). In terms of biological role, transfers the 4'-phosphopantetheine moiety from coenzyme A to a Ser of acyl-carrier-protein. This is Holo-[acyl-carrier-protein] synthase from Bordetella pertussis (strain Tohama I / ATCC BAA-589 / NCTC 13251).